The primary structure comprises 569 residues: Thiol:disulfide interchange protein DsbD (569 aa).

A signal peptide spans 1-19 (MAQRILTLILLLCSTSAFA). 2 cysteine pairs are disulfide-bonded: Cys122-Cys128 and Cys187-Cys309. 7 helical membrane passes run 168–188 (LPFS…TPCV), 213–233 (LLTF…GLVV), 248–268 (YVLI…FGLF), 301–321 (IAGL…LLYI), 328–348 (WLGG…LILI), 362–382 (WMEH…VFLL), and 391–411 (GLRL…ITSL). One can recognise a Thioredoxin domain in the interval 430 to 569 (LVSVRPLQDW…FSAHLRDRQP (140 aa)). A disulfide bridge links Cys484 with Cys487.

The protein belongs to the thioredoxin family. DsbD subfamily.

It is found in the cell inner membrane. It carries out the reaction [protein]-dithiol + NAD(+) = [protein]-disulfide + NADH + H(+). The enzyme catalyses [protein]-dithiol + NADP(+) = [protein]-disulfide + NADPH + H(+). Required to facilitate the formation of correct disulfide bonds in some periplasmic proteins and for the assembly of the periplasmic c-type cytochromes. Acts by transferring electrons from cytoplasmic thioredoxin to the periplasm. This transfer involves a cascade of disulfide bond formation and reduction steps. The sequence is that of Thiol:disulfide interchange protein DsbD from Citrobacter koseri (strain ATCC BAA-895 / CDC 4225-83 / SGSC4696).